Consider the following 213-residue polypeptide: N-(5'-phosphoribosyl)anthranilate isomerase (213 aa).

The protein belongs to the TrpF family.

It carries out the reaction N-(5-phospho-beta-D-ribosyl)anthranilate = 1-(2-carboxyphenylamino)-1-deoxy-D-ribulose 5-phosphate. The protein operates within amino-acid biosynthesis; L-tryptophan biosynthesis; L-tryptophan from chorismate: step 3/5. The polypeptide is N-(5'-phosphoribosyl)anthranilate isomerase (Leptospira interrogans serogroup Icterohaemorrhagiae serovar copenhageni (strain Fiocruz L1-130)).